A 352-amino-acid polypeptide reads, in one-letter code: Homocitrate synthase, omega subunit (352 aa).

It belongs to the alpha-IPM synthase/homocitrate synthase family. In terms of assembly, heterodimer of an alpha and an omega chain.

It catalyses the reaction acetyl-CoA + 2-oxoglutarate + H2O = (2R)-homocitrate + CoA + H(+). This protein is a Fe-Mo-cofactor biosynthetic component. This Clostridium pasteurianum protein is Homocitrate synthase, omega subunit (nifV-OMEGA).